The chain runs to 1059 residues: Putative ATP-dependent RNA helicase BoYb (1059 aa).

The Q motif motif lies at 54 to 82; it reads RRFAEVSLLPDILETMRNLGLNRLLRLQS. The 198-residue stretch at 87–284 folds into the Helicase ATP-binding domain; it reads HLAGGSGHGA…RAVNDKPALV (198 aa). 100 to 107 lines the ATP pocket; the sequence is GSPASGRT. The short motif at 230–233 is the DEAD box element; the sequence is DDVD. Residues 575-639 form the Tudor domain; it reads PPVAGAICMY…GKLFECPEAL (65 aa). The disordered stretch occupies residues 756–787; that stretch reads VQDSKEKANSKPHEKMKGKMTDQPAKLQSQPP. A compositionally biased stretch (basic and acidic residues) spans 757–775; that stretch reads QDSKEKANSKPHEKMKGKM.

It is found in the cytoplasm. It catalyses the reaction ATP + H2O = ADP + phosphate + H(+). In terms of biological role, involved in primary piRNA biogenesis in germline cells. This Drosophila melanogaster (Fruit fly) protein is Putative ATP-dependent RNA helicase BoYb (BoYb).